A 207-amino-acid polypeptide reads, in one-letter code: Holliday junction branch migration complex subunit RuvA (207 aa).

Residues 1-68 (MIGYLQGSLA…EDQWLLFGFL (68 aa)) form a domain I region. The segment at 69 to 147 (QMAERDLFRQ…EWREEAGLLP (79 aa)) is domain II. Residues 148 to 158 (SATAAPIAAVQ) are flexible linker. The segment at 158–207 (QEDVEMTLLALGYNNREILQALTAIAQENLVQSGQPAEDWIREAIAWLSR) is domain III.

Belongs to the RuvA family. In terms of assembly, homotetramer. Forms an RuvA(8)-RuvB(12)-Holliday junction (HJ) complex. HJ DNA is sandwiched between 2 RuvA tetramers; dsDNA enters through RuvA and exits via RuvB. An RuvB hexamer assembles on each DNA strand where it exits the tetramer. Each RuvB hexamer is contacted by two RuvA subunits (via domain III) on 2 adjacent RuvB subunits; this complex drives branch migration. In the full resolvosome a probable DNA-RuvA(4)-RuvB(12)-RuvC(2) complex forms which resolves the HJ.

The protein localises to the cytoplasm. Functionally, the RuvA-RuvB-RuvC complex processes Holliday junction (HJ) DNA during genetic recombination and DNA repair, while the RuvA-RuvB complex plays an important role in the rescue of blocked DNA replication forks via replication fork reversal (RFR). RuvA specifically binds to HJ cruciform DNA, conferring on it an open structure. The RuvB hexamer acts as an ATP-dependent pump, pulling dsDNA into and through the RuvAB complex. HJ branch migration allows RuvC to scan DNA until it finds its consensus sequence, where it cleaves and resolves the cruciform DNA. In Synechococcus elongatus (strain ATCC 33912 / PCC 7942 / FACHB-805) (Anacystis nidulans R2), this protein is Holliday junction branch migration complex subunit RuvA.